The primary structure comprises 785 residues: Endonuclease MutS2 (785 aa).

Gly-335 to Thr-342 contributes to the ATP binding site. The region spanning Leu-710–Lys-785 is the Smr domain.

This sequence belongs to the DNA mismatch repair MutS family. MutS2 subfamily. Homodimer. Binds to stalled ribosomes, contacting rRNA.

Endonuclease that is involved in the suppression of homologous recombination and thus may have a key role in the control of bacterial genetic diversity. In terms of biological role, acts as a ribosome collision sensor, splitting the ribosome into its 2 subunits. Detects stalled/collided 70S ribosomes which it binds and splits by an ATP-hydrolysis driven conformational change. Acts upstream of the ribosome quality control system (RQC), a ribosome-associated complex that mediates the extraction of incompletely synthesized nascent chains from stalled ribosomes and their subsequent degradation. Probably generates substrates for RQC. In Listeria monocytogenes serotype 4a (strain HCC23), this protein is Endonuclease MutS2.